A 494-amino-acid chain; its full sequence is NADH-quinone oxidoreductase subunit N (494 aa).

14 helical membrane passes run 13 to 33, 43 to 63, 82 to 102, 117 to 137, 138 to 158, 169 to 189, 209 to 229, 243 to 263, 277 to 297, 311 to 331, 332 to 352, 380 to 400, 412 to 432, and 461 to 481; these read LIAL…MLAI, FVLT…AMGV, MALV…YLGG, LLIL…HLVG, LFIG…YAFF, YMVL…LLYA, LLVE…LSLV, PAPV…AVLL, LNEL…LLAL, IAHF…AVEA, IGVY…VITL, AVLT…GFIG, QLWW…FYYL, and IMLL…QPLL.

It belongs to the complex I subunit 2 family. As to quaternary structure, NDH-1 is composed of 13 different subunits. Subunits NuoA, H, J, K, L, M, N constitute the membrane sector of the complex.

Its subcellular location is the cell inner membrane. The catalysed reaction is a quinone + NADH + 5 H(+)(in) = a quinol + NAD(+) + 4 H(+)(out). NDH-1 shuttles electrons from NADH, via FMN and iron-sulfur (Fe-S) centers, to quinones in the respiratory chain. The immediate electron acceptor for the enzyme in this species is believed to be ubiquinone. Couples the redox reaction to proton translocation (for every two electrons transferred, four hydrogen ions are translocated across the cytoplasmic membrane), and thus conserves the redox energy in a proton gradient. This Ectopseudomonas mendocina (strain ymp) (Pseudomonas mendocina) protein is NADH-quinone oxidoreductase subunit N.